The primary structure comprises 488 residues: Regulatory protein ViaA (488 aa).

Belongs to the ViaA family. In terms of assembly, homodimer. Interacts with RavA.

It localises to the cytoplasm. Functionally, component of the RavA-ViaA chaperone complex, which may act on the membrane to optimize the function of some of the respiratory chains. ViaA stimulates the ATPase activity of RavA. This is Regulatory protein ViaA from Yersinia pseudotuberculosis serotype O:1b (strain IP 31758).